The following is a 306-amino-acid chain: Protein FdhE homolog (306 aa).

It belongs to the FdhE family.

It is found in the cytoplasm. Necessary for formate dehydrogenase activity. This chain is Protein FdhE homolog, found in Proteus mirabilis (strain HI4320).